Reading from the N-terminus, the 355-residue chain is WD repeat domain phosphoinositide-interacting protein 4 (355 aa).

2 WD repeats span residues 2–40 and 185–225; these read SQQR…EKGH and AHQS…QLVE. The short motif at 226–229 is the L/FRRG motif element; sequence LRRG. The stretch at 230–269 is one WD 3 repeat; the sequence is TDPATLYCINFSHDSSFLCSSSDKGTVHIFALKDTKLNRR.

This sequence belongs to the WD repeat PROPPIN family.

It is found in the preautophagosomal structure. Component of the autophagy machinery that controls the major intracellular degradation process by which cytoplasmic materials are packaged into autophagosomes and delivered to lysosomes for degradation. Binds phosphatidylinositol 3-phosphate (PtdIns3P). The polypeptide is WD repeat domain phosphoinositide-interacting protein 4 (wdr45) (Xenopus laevis (African clawed frog)).